A 334-amino-acid chain; its full sequence is D-alanine--D-alanine ligase (334 aa).

The 201-residue stretch at 114–314 folds into the ATP-grasp domain; the sequence is KRIWRFEGLP…YEELCLRILA (201 aa). 140–195 provides a ligand contact to ATP; the sequence is LEDLGSPMIVKPSREGSTIGLTKVTSPGQCEQAYRLASRYDPEVLCEQFIEGEETT. D267, E281, and N283 together coordinate Mg(2+).

Belongs to the D-alanine--D-alanine ligase family. The cofactor is Mg(2+). It depends on Mn(2+) as a cofactor.

The protein resides in the cytoplasm. The catalysed reaction is 2 D-alanine + ATP = D-alanyl-D-alanine + ADP + phosphate + H(+). Its pathway is cell wall biogenesis; peptidoglycan biosynthesis. In terms of biological role, cell wall formation. This Paracidovorax citrulli (strain AAC00-1) (Acidovorax citrulli) protein is D-alanine--D-alanine ligase.